A 448-amino-acid chain; its full sequence is Trigger factor (448 aa).

Residues Asp162–Pro243 form the PPIase FKBP-type domain. Residues Asp426–Glu448 are disordered. Residues Phe437–Glu448 are compositionally biased toward acidic residues.

This sequence belongs to the FKBP-type PPIase family. Tig subfamily.

It localises to the cytoplasm. It carries out the reaction [protein]-peptidylproline (omega=180) = [protein]-peptidylproline (omega=0). Its function is as follows. Involved in protein export. Acts as a chaperone by maintaining the newly synthesized protein in an open conformation. Functions as a peptidyl-prolyl cis-trans isomerase. The sequence is that of Trigger factor from Corynebacterium diphtheriae (strain ATCC 700971 / NCTC 13129 / Biotype gravis).